A 245-amino-acid chain; its full sequence is Ribosomal RNA large subunit methyltransferase E (245 aa).

5 residues coordinate S-adenosyl-L-methionine: Gly58, Trp60, Asp78, Asp96, and Asp123. Residue Lys163 is the Proton acceptor of the active site.

Belongs to the class I-like SAM-binding methyltransferase superfamily. RNA methyltransferase RlmE family.

The protein localises to the cytoplasm. It catalyses the reaction uridine(2552) in 23S rRNA + S-adenosyl-L-methionine = 2'-O-methyluridine(2552) in 23S rRNA + S-adenosyl-L-homocysteine + H(+). Specifically methylates the uridine in position 2552 of 23S rRNA at the 2'-O position of the ribose in the fully assembled 50S ribosomal subunit. The protein is Ribosomal RNA large subunit methyltransferase E of Methanocaldococcus jannaschii (strain ATCC 43067 / DSM 2661 / JAL-1 / JCM 10045 / NBRC 100440) (Methanococcus jannaschii).